Here is a 236-residue protein sequence, read N- to C-terminus: V-set and transmembrane domain-containing protein 1 (236 aa).

An N-terminal signal peptide occupies residues 1–16; sequence MTAEFLSLLCLGLCLG. The Extracellular segment spans residues 17-135; it reads YEDEKKNEKP…APSMKTDTRT (119 aa). Residues 27 to 114 enclose the Ig-like V-type domain; that stretch reads PKPSLHAWPS…EWSESSEHLQ (88 aa). Residues asparagine 44 and asparagine 55 are each glycosylated (N-linked (GlcNAc...) asparagine). A disulfide bridge connects residues cysteine 49 and cysteine 96. A helical membrane pass occupies residues 136 to 156; it reads IFVAIFSCISILLLFLSVFII. Residues 157-236 lie on the Cytoplasmic side of the membrane; that stretch reads YRCSQHSSSS…GSHEYAALKV (80 aa). The segment at 166–200 is disordered; it reads SEESTKRTSHSKLPEQEAAEADLSNMERVSLSTAD. 2 short sequence motifs (ITIM motif) span residues 204–209 and 229–234; these read VTYAEL and HEYAAL. Residues 215–236 are disordered; that stretch reads SEAASDTTQEPPGSHEYAALKV.

In terms of processing, isoform 2 is N-glycosylated. Expressed on myeloid (neutrophils, eosinophils and monocytes) but not on lymphoid cells.

It is found in the membrane. The protein resides in the secreted. Functionally, behaves as a cytokine, promoting IL17A secretion by CD4+ T-cells, and differentiation and activation of IL17 producing helper T-cells (TH17). Inhibitory immune receptor involved in the regulation of phagocytes. This Homo sapiens (Human) protein is V-set and transmembrane domain-containing protein 1 (VSTM1).